The sequence spans 394 residues: Subtilisin-like protease CPC735_005570 (394 aa).

Positions 1 to 21 (MRAIISVALFLSLSLLSAVNA) are cleaved as a signal peptide. Positions 22–114 (AEILSAGDTD…IEHDRIANAR (93 aa)) are excised as a propeptide. In terms of domain architecture, Inhibitor I9 spans 37-110 (SYIVVMRDGL…AVKYIEHDRI (74 aa)). One can recognise a Peptidase S8 domain in the interval 123–394 (GWNLARISHK…RLLLYNGSGR (272 aa)). Active-site charge relay system residues include D155 and H186. Residues N216 and N247 are each glycosylated (N-linked (GlcNAc...) asparagine). Catalysis depends on S340, which acts as the Charge relay system. N-linked (GlcNAc...) asparagine glycosylation is found at N382 and N390.

It belongs to the peptidase S8 family.

Its subcellular location is the secreted. Secreted subtilisin-like serine protease with keratinolytic activity that contributes to pathogenicity. The protein is Subtilisin-like protease CPC735_005570 of Coccidioides posadasii (strain C735) (Valley fever fungus).